Reading from the N-terminus, the 105-residue chain is Nitrogenase-stabilizing/protective protein NifW (105 aa).

The protein belongs to the NifW family. As to quaternary structure, homotrimer; associates with NifD.

Functionally, may protect the nitrogenase Fe-Mo protein from oxidative damage. The polypeptide is Nitrogenase-stabilizing/protective protein NifW (Rhodospirillum centenum (strain ATCC 51521 / SW)).